A 239-amino-acid chain; its full sequence is Lactate utilization protein A (239 aa).

It belongs to the LutA/YkgE family.

Its function is as follows. Is involved in L-lactate degradation and allows cells to grow with lactate as the sole carbon source. This Bacillus cereus (strain B4264) protein is Lactate utilization protein A.